The primary structure comprises 324 residues: Glyoxylate/hydroxypyruvate reductase B (324 aa).

Residues Arg-237 and Glu-266 contribute to the active site. The Proton donor role is filled by His-285.

The protein belongs to the D-isomer specific 2-hydroxyacid dehydrogenase family. GhrB subfamily. Homodimer.

Its subcellular location is the cytoplasm. The catalysed reaction is glycolate + NADP(+) = glyoxylate + NADPH + H(+). The enzyme catalyses (R)-glycerate + NAD(+) = 3-hydroxypyruvate + NADH + H(+). It carries out the reaction (R)-glycerate + NADP(+) = 3-hydroxypyruvate + NADPH + H(+). Catalyzes the NADPH-dependent reduction of glyoxylate and hydroxypyruvate into glycolate and glycerate, respectively. In Salmonella paratyphi B (strain ATCC BAA-1250 / SPB7), this protein is Glyoxylate/hydroxypyruvate reductase B.